A 349-amino-acid chain; its full sequence is Core protein VP7 (349 aa).

N287 is a glycosylation site (N-linked (GlcNAc...) asparagine; by host).

It belongs to the orbivirus VP7 family. Homotrimer that assemble in a complex of 260 capsomers on an inner scaffold composed of VP3.

The protein localises to the virion. In terms of biological role, the VP7 protein is one of the five proteins (with VP1, VP3, VP4, and VP6) which form the inner capsid of the virus. The chain is Core protein VP7 (Segment-7) from Antilocapra americana (Pronghorn).